The sequence spans 475 residues: Zinc finger protein 383 (475 aa).

The KRAB domain occupies 6 to 77 (VMFSDVSIDF…GRELTRGLCS (72 aa)). C2H2-type zinc fingers lie at residues 170–192 (FECK…QRIH), 198–220 (YECK…LKIH), 226–248 (FECK…QRIH), 254–276 (YECK…QRIH), 282–304 (YACK…VRIH), 310–332 (YECK…QRIH), 338–360 (YECK…QRIH), 366–388 (YDCK…QRIH), 394–416 (FECL…QRIH), 422–444 (YECN…LRIH), and 450–472 (YNCK…QGIH).

Belongs to the krueppel C2H2-type zinc-finger protein family.

Its subcellular location is the nucleus. It localises to the cytoplasm. Its function is as follows. May function as a transcriptional repressor, suppressing transcriptional activities mediated by MAPK signaling pathways. This chain is Zinc finger protein 383 (ZNF383), found in Macaca fascicularis (Crab-eating macaque).